The primary structure comprises 247 residues: Probable 2-phosphosulfolactate phosphatase (247 aa).

The protein belongs to the ComB family. Requires Mg(2+) as cofactor.

It catalyses the reaction (2R)-O-phospho-3-sulfolactate + H2O = (2R)-3-sulfolactate + phosphate. The polypeptide is Probable 2-phosphosulfolactate phosphatase (Clostridium perfringens (strain SM101 / Type A)).